Reading from the N-terminus, the 80-residue chain is Delta-actitoxin-Amc2a (80 aa).

Residues 1–19 (MNKVLFLCLVVLCATSAFA) form the signal peptide. Positions 20–30 (AEEEYVERAPV) are excised as a propeptide. 3 disulfide bridges follow: Cys-37–Cys-73, Cys-39–Cys-65, and Cys-55–Cys-74. Pro-56 carries the post-translational modification Hydroxyproline.

It belongs to the sea anemone type 3 (BDS) potassium channel toxin family.

The protein resides in the secreted. The protein localises to the nematocyst. In terms of biological role, neurotoxon that induces paralysis when injected into crabs. The protein is Delta-actitoxin-Amc2a of Antheopsis maculata (Sea anemone).